The primary structure comprises 141 residues: Nucleoside diphosphate kinase (141 aa).

ATP contacts are provided by lysine 11, phenylalanine 59, arginine 87, threonine 93, arginine 104, and asparagine 114. Histidine 117 acts as the Pros-phosphohistidine intermediate in catalysis.

The protein belongs to the NDK family. In terms of assembly, homotetramer. The cofactor is Mg(2+).

Its subcellular location is the cytoplasm. The catalysed reaction is a 2'-deoxyribonucleoside 5'-diphosphate + ATP = a 2'-deoxyribonucleoside 5'-triphosphate + ADP. The enzyme catalyses a ribonucleoside 5'-diphosphate + ATP = a ribonucleoside 5'-triphosphate + ADP. Major role in the synthesis of nucleoside triphosphates other than ATP. The ATP gamma phosphate is transferred to the NDP beta phosphate via a ping-pong mechanism, using a phosphorylated active-site intermediate. The chain is Nucleoside diphosphate kinase from Cupriavidus taiwanensis (strain DSM 17343 / BCRC 17206 / CCUG 44338 / CIP 107171 / LMG 19424 / R1) (Ralstonia taiwanensis (strain LMG 19424)).